A 254-amino-acid polypeptide reads, in one-letter code: 5-oxoprolinase subunit A (254 aa).

It belongs to the LamB/PxpA family. In terms of assembly, forms a complex composed of PxpA, PxpB and PxpC.

The catalysed reaction is 5-oxo-L-proline + ATP + 2 H2O = L-glutamate + ADP + phosphate + H(+). Catalyzes the cleavage of 5-oxoproline to form L-glutamate coupled to the hydrolysis of ATP to ADP and inorganic phosphate. This chain is 5-oxoprolinase subunit A, found in Brevibacillus brevis (strain 47 / JCM 6285 / NBRC 100599).